The following is a 50-amino-acid chain: uncharacterized protein (50 aa).

Residues 5-19 traverse the membrane as a helical segment; that stretch reads IIIIVIVIIIFFFYL. The stretch at 19-50 forms a coiled coil; the sequence is LKQKKLTNCETQVVKVQKDIDEINLKLKKLNK.

Its subcellular location is the membrane. This is an uncharacterized protein from Acheta domesticus (House cricket).